The chain runs to 481 residues: Proton-coupled amino acid transporter 2 (481 aa).

The Cytoplasmic portion of the chain corresponds to 1–56 (MSVTKSAGSPQVAATVKLDLVSFPESAKKVQSQDPNPVNGSSSESSEKTKGITGFQ). Positions 26–49 (SAKKVQSQDPNPVNGSSSESSEKT) are disordered. The segment covering 29–40 (KVQSQDPNPVNG) has biased composition (polar residues). Residues 57 to 77 (TLVHLVKGNMGTGILGLPLAV) form a helical membrane-spanning segment. Over 78–79 (KN) the chain is Extracellular. The helical transmembrane segment at 80 to 100 (AGILMGPLSLLVMGLIACHCM) threads the bilayer. The Cytoplasmic segment spans residues 101–146 (HILVRCAQRFCHRLNKPFMDYGDTVMHGLASSPNTWLQSHAHWGRH). A helical transmembrane segment spans residues 147 to 167 (AVSFFLIVTQLGFCCVYIVFL). Residues 168-195 (ADNLKQVVEAVNSTTISCHKNETVVLTP) are Extracellular-facing. Residues 196–216 (TIDSRLYMLAFLPVLGLLVFI) traverse the membrane as a helical segment. Residues 217–220 (RNLR) are Cytoplasmic-facing. The chain crosses the membrane as a helical span at residues 221 to 241 (VLTIFSLLANVSMLVSLVIIG). Residues 242–262 (QYIIQGIPDPSQLPLVASWKT) are Extracellular-facing. Residues 263–283 (YPLFFGTAIFSFESIGVVLPL) form a helical membrane-spanning segment. Residues 284-295 (ENKMKDARRFPT) are Cytoplasmic-facing. Residues 296–316 (ILSLGMSIITTLYIAIGALGY) form a helical membrane-spanning segment. Residues 317-343 (LRFGDDIKASITLNLPNCWLYQSVKLL) lie on the Extracellular side of the membrane. Residues 344–364 (YVVGILCTHALQFYVPAEIII) traverse the membrane as a helical segment. Residues 365–377 (PLAVSQVSKRWAL) are Cytoplasmic-facing. A helical membrane pass occupies residues 378 to 398 (PVDLSIRLALVCVTCMLAILI). Residues 399–402 (PRLD) lie on the Extracellular side of the membrane. A helical membrane pass occupies residues 403–423 (LVLSLVGSVSSSALALIIPPL). Residues 424–444 (LEVTTYYGEGMSPLTITKDAL) are Cytoplasmic-facing. A helical membrane pass occupies residues 445–465 (ISILGFMGFVVGTYQALDELI). Residues 466–481 (RSGNSLPLSNSTMFIQ) are Extracellular-facing.

It belongs to the amino acid/polyamine transporter 2 family. In terms of tissue distribution, expressed in lung and spleen, and to a lower extent in brain, heart, kidney and skeletal muscle.

The protein localises to the cell membrane. Its subcellular location is the endoplasmic reticulum membrane. It is found in the recycling endosome membrane. The enzyme catalyses glycine(in) + H(+)(in) = glycine(out) + H(+)(out). It carries out the reaction L-alanine(in) + H(+)(in) = L-alanine(out) + H(+)(out). It catalyses the reaction D-alanine(in) + H(+)(in) = D-alanine(out) + H(+)(out). The catalysed reaction is L-proline(out) + H(+)(out) = L-proline(in) + H(+)(in). The enzyme catalyses D-proline(out) + H(+)(out) = D-proline(in) + H(+)(in). It carries out the reaction 4-hydroxy-L-proline(in) + H(+)(in) = 4-hydroxy-L-proline(out) + H(+)(out). It catalyses the reaction L-serine(in) + H(+)(in) = L-serine(out) + H(+)(out). The catalysed reaction is D-serine(out) + H(+)(out) = D-serine(in) + H(+)(in). The enzyme catalyses beta-alanine(in) + H(+)(in) = beta-alanine(out) + H(+)(out). It carries out the reaction 4-aminobutanoate(in) + H(+)(in) = 4-aminobutanoate(out) + H(+)(out). It catalyses the reaction sarcosine(in) + H(+)(in) = sarcosine(out) + H(+)(out). The catalysed reaction is N,N-dimethylglycine(in) + H(+)(in) = N,N-dimethylglycine(out) + H(+)(out). Its activity is regulated as follows. Inhibited by L- and D-pipecolic acid, nipecotic acid, isonipecotic acid, L- and D-cycloserine, and L-2-azetidine-carboxylate. Its function is as follows. Electrogenic proton/amino acid symporter with a high selectivity for the small side chains amino acids glycine, alanine and proline, where both L- and D-enantiomers are transported. Extension of the backbone length, as in beta-alanine and 4-aminobutanoate or methylation of the amino group, as in sarcosine and N,N-dimethylglycine, are also tolerated but decrease transport efficiency. A free carboxyl group is preferred. This is Proton-coupled amino acid transporter 2 from Rattus norvegicus (Rat).